We begin with the raw amino-acid sequence, 358 residues long: F-box/kelch-repeat protein SKIP4 (358 aa).

The F-box domain occupies 20–67 (ALISGVPDDISKSCLARVPREYHMAMKCVSRRWRDFVCSDEMCDYRNE). Kelch repeat units lie at residues 78–122 (LCRD…VLGK), 123–171 (RLFV…TLDG), 173–219 (IIAI…VMDG), 220–269 (RIYI…VLDQ), 271–307 (FGAK…SIGN), and 308–355 (SIFV…SCKS).

In terms of assembly, part of a SCF (SKP1-cullin-F-box) protein ligase complex. Interacts with SKP1A/ASK1.

It participates in protein modification; protein ubiquitination. This is F-box/kelch-repeat protein SKIP4 (SKIP4) from Arabidopsis thaliana (Mouse-ear cress).